The following is a 241-amino-acid chain: Chloride intracellular channel protein 1 (241 aa).

The residue at position 2 (Ala2) is an N-acetylalanine. The interval 2–90 is required for insertion into the membrane; sequence AEEQPQVELF…EEFLEAVLCP (89 aa). Position 13 is an N6-acetyllysine (Lys13). Residues 24–27 carry the G-site motif; sequence CPFS. An intrachain disulfide couples Cys24 to Cys59. Residues 26 to 46 traverse the membrane as a helical segment; sequence FSQRLFMVLWLKGVTFNVTTV. In terms of domain architecture, GST C-terminal spans 93–233; that stretch reads YPKLAALNPE…PDDEEIELAY (141 aa). An N6-acetyllysine modification is found at Lys119. Ser121 bears the Phosphoserine mark. Lys131 bears the N6-acetyllysine mark. Ser156 carries the phosphoserine modification. Tyr233 carries the post-translational modification Phosphotyrosine.

Belongs to the chloride channel CLIC family. In terms of assembly, monomer. Homodimer (in vitro). Interacts with TRAPPC2. Dimerization requires a conformation change that leads to the exposure of a large hydrophobic surface. In vivo, this may lead to membrane insertion.

It localises to the nucleus. The protein localises to the nucleus membrane. It is found in the cytoplasm. Its subcellular location is the cell membrane. The protein resides in the endoplasmic reticulum. The catalysed reaction is L-dehydroascorbate + 2 glutathione = glutathione disulfide + L-ascorbate. It carries out the reaction chloride(in) = chloride(out). It catalyses the reaction iodide(out) = iodide(in). The enzyme catalyses thiocyanate(in) = thiocyanate(out). The catalysed reaction is nitrate(in) = nitrate(out). It carries out the reaction bromide(in) = bromide(out). It catalyses the reaction fluoride(in) = fluoride(out). Functionally, in the soluble state, catalyzes glutaredoxin-like thiol disulfide exchange reactions with reduced glutathione as electron donor. Reduces selenite and dehydroascorbate and may act as an antioxidant during oxidative stress response. Can insert into membranes and form voltage-dependent multi-ion conductive channels. Membrane insertion seems to be redox-regulated and may occur only under oxidizing conditions. Involved in regulation of the cell cycle. The sequence is that of Chloride intracellular channel protein 1 (CLIC1) from Bos taurus (Bovine).